We begin with the raw amino-acid sequence, 240 residues long: Uridylate kinase (240 aa).

12-15 (KLSG) contributes to the ATP binding site. The interval 20-25 (GEDGFG) is involved in allosteric activation by GTP. Gly-54 provides a ligand contact to UMP. Residues Gly-55 and Arg-59 each coordinate ATP. UMP-binding positions include Asp-74 and 135–142 (TGNPYFST). Asn-163, Tyr-169, and Asp-172 together coordinate ATP.

This sequence belongs to the UMP kinase family. In terms of assembly, homohexamer.

Its subcellular location is the cytoplasm. The enzyme catalyses UMP + ATP = UDP + ADP. It functions in the pathway pyrimidine metabolism; CTP biosynthesis via de novo pathway; UDP from UMP (UMPK route): step 1/1. Its activity is regulated as follows. Allosterically activated by GTP. Probably inhibited by UTP. Catalyzes the reversible phosphorylation of UMP to UDP. The chain is Uridylate kinase (pyrH) from Enterococcus faecalis (strain ATCC 700802 / V583).